Here is a 378-residue protein sequence, read N- to C-terminus: Trans-enoyl reductase poxP (378 aa).

62–65 contacts NADP(+); that stretch reads CDWK. Residue 151–158 participates in substrate binding; sequence SVFATLWI. Residues 187-190, 210-213, Tyr228, and 275-276 each bind NADP(+); these read STST, SPHN, and LE. 295 to 299 is a substrate binding site; sequence GLAAS. 364-365 is a binding site for NADP(+); it reads TS.

It belongs to the zinc-containing alcohol dehydrogenase family. As to quaternary structure, monomer.

It functions in the pathway secondary metabolite biosynthesis. Its function is as follows. Trans-enoyl reductase; part of the gene cluster that mediates the biosynthesis of oxaleimides, cytotoxic compounds containing an unusual disubstituted succinimide moiety. The first step of the pathway is provided by the HR-PKS poxF that serves in a new mode of collaborative biosynthesis with the PKS-NRPS poxE, by providing the olefin containing amino acid substrate via the synthesis of an ACP-bound dec-4-enoate. The cytochrome P450 monooxygenase poxM-catalyzed oxidation at the alpha-position creates the enzyme-bound 2-hydroxydec-4-enoyl-ACP thioester, which may be prone to spontaneous hydrolysis to yield 2-hydroxydec-4-enoic acid due to increased electrophilicity of the carbonyl. 2-hydroxydec-4-enoic acid can then be further oxidized by poxM to yield the alpha-ketoacid 2-oxodec-4-enoicacid, which is reductively aminated by the aminotransferase poxL to yield (S,E)-2-aminodec-4-enoic acid. The Hybrid PKS-NRPS synthetase poxE then performs condensation between the octaketide product of its PKS modules and the amino group of (S,E)-2-aminodec-4-enoic acid which is activated and incorporated by the adenylation domain. The resulting aminoacyl product can be cyclized by the Diels-Alderase PoxQ and reductively released by the reductive (R) domain of poxE to yield an aldehyde intermediate. The released aldehyde is then substrate for a Knoevenagel condensation by the hydrolyase poxO followed by an oxidation at the 5-position of the pyrrolidone ring. The presence of the olefin from the amino acid building block allows for migration of the substituted allyl group to occur. This allylic transposition reaction takes place in a conjugate addition, semipinacol-like fashion to yield a succinimide intermediate. Iterative two-electron oxidations of the C7 methyl of the succinimide intermediate to the carboxylic acid can be catalyzed by one of two remaining cytochrome P450 monooxygenasess poxC or poxD to yield oxaleimide A. Subsequent oxidation yields the maleimide scaffold oxaleimide I. Both oxaleimide A and oxaleimide I can undergo oxidative modifications in the decalin ring to yield the series of products oxaleimides B to H. The polypeptide is Trans-enoyl reductase poxP (Penicillium oxalicum).